We begin with the raw amino-acid sequence, 494 residues long: Adenosylhomocysteinase (494 aa).

Substrate is bound by residues threonine 72, aspartate 155, and glutamate 217. 218 to 220 (TTT) contacts NAD(+). Substrate contacts are provided by lysine 247 and aspartate 251. Residues asparagine 252, 281–286 (GYGDVG), glutamate 304, asparagine 339, 360–362 (IGH), and asparagine 408 each bind NAD(+).

It belongs to the adenosylhomocysteinase family. Requires NAD(+) as cofactor.

The protein resides in the cytoplasm. The catalysed reaction is S-adenosyl-L-homocysteine + H2O = L-homocysteine + adenosine. The protein operates within amino-acid biosynthesis; L-homocysteine biosynthesis; L-homocysteine from S-adenosyl-L-homocysteine: step 1/1. May play a key role in the regulation of the intracellular concentration of adenosylhomocysteine. The sequence is that of Adenosylhomocysteinase from Nocardia farcinica (strain IFM 10152).